Here is a 127-residue protein sequence, read N- to C-terminus: Protein ApaG (127 aa).

The ApaG domain maps to 3–127; it reads NERKYSIKVE…FILSVPRVLH (125 aa).

This is Protein ApaG from Nitrosomonas europaea (strain ATCC 19718 / CIP 103999 / KCTC 2705 / NBRC 14298).